The sequence spans 160 residues: Small ribosomal subunit protein uS7 (160 aa).

Belongs to the universal ribosomal protein uS7 family. In terms of assembly, part of the 30S ribosomal subunit. Contacts proteins S9 and S11.

Functionally, one of the primary rRNA binding proteins, it binds directly to 16S rRNA where it nucleates assembly of the head domain of the 30S subunit. Is located at the subunit interface close to the decoding center, probably blocks exit of the E-site tRNA. The sequence is that of Small ribosomal subunit protein uS7 from Rickettsia conorii (strain ATCC VR-613 / Malish 7).